Consider the following 134-residue polypeptide: Large-conductance mechanosensitive channel (134 aa).

The next 2 membrane-spanning stretches (helical) occupy residues 16 to 36 and 81 to 101; these read VIDL…VTAL and GDFI…FIIV.

The protein belongs to the MscL family. As to quaternary structure, homopentamer.

The protein localises to the cell inner membrane. Its function is as follows. Channel that opens in response to stretch forces in the membrane lipid bilayer. May participate in the regulation of osmotic pressure changes within the cell. The protein is Large-conductance mechanosensitive channel of Xylella fastidiosa (strain Temecula1 / ATCC 700964).